Consider the following 601-residue polypeptide: Threonine dehydratase (601 aa).

A chloroplast-targeting transit peptide spans 1-51; it reads MEVLCQAPAGNSNFACNPKFTAIRTRAISSNDTFKVISSTGNNKKMKGAIR. 2 consecutive ACT-like domains span residues 427 to 499 and 521 to 592; these read ALLA…NLTN and IFCQ…IESL.

Belongs to the serine/threonine dehydratase family. It depends on pyridoxal 5'-phosphate as a cofactor.

It localises to the plastid. Its subcellular location is the chloroplast. It catalyses the reaction L-threonine = 2-oxobutanoate + NH4(+). Its pathway is amino-acid biosynthesis; L-isoleucine biosynthesis; 2-oxobutanoate from L-threonine: step 1/1. In terms of biological role, catalyzes the conversion of threonine to alpha-keto butyrate in isoleucine (Ile) biosynthesis. Required for JA-Ile biosynthesis, a signaling molecule involved in defense and resistance to the herbivore Manduca sexta caterpillars. The polypeptide is Threonine dehydratase (Nicotiana attenuata (Coyote tobacco)).